We begin with the raw amino-acid sequence, 343 residues long: Anthranilate phosphoribosyltransferase (343 aa).

5-phospho-alpha-D-ribose 1-diphosphate is bound by residues glycine 78, 81-82, threonine 86, 88-91, 106-114, and serine 118; these read GD, NIST, and KHGNRSVSS. An anthranilate-binding site is contributed by glycine 78. Serine 90 serves as a coordination point for Mg(2+). Asparagine 109 is a binding site for anthranilate. Arginine 164 provides a ligand contact to anthranilate. Aspartate 223 and glutamate 224 together coordinate Mg(2+).

Belongs to the anthranilate phosphoribosyltransferase family. As to quaternary structure, homodimer. Mg(2+) is required as a cofactor.

It carries out the reaction N-(5-phospho-beta-D-ribosyl)anthranilate + diphosphate = 5-phospho-alpha-D-ribose 1-diphosphate + anthranilate. Its pathway is amino-acid biosynthesis; L-tryptophan biosynthesis; L-tryptophan from chorismate: step 2/5. Functionally, catalyzes the transfer of the phosphoribosyl group of 5-phosphorylribose-1-pyrophosphate (PRPP) to anthranilate to yield N-(5'-phosphoribosyl)-anthranilate (PRA). The chain is Anthranilate phosphoribosyltransferase from Chlamydia caviae (strain ATCC VR-813 / DSM 19441 / 03DC25 / GPIC) (Chlamydophila caviae).